The sequence spans 189 residues: UPF0301 protein PSPA7_0505 (189 aa).

Belongs to the UPF0301 (AlgH) family.

In Pseudomonas paraeruginosa (strain DSM 24068 / PA7) (Pseudomonas aeruginosa (strain PA7)), this protein is UPF0301 protein PSPA7_0505.